The sequence spans 139 residues: Small ribosomal subunit protein bS16 (139 aa).

Positions 85–108 (ESKSGKKPAKKATTKEASAKKPTD) are disordered. Basic and acidic residues predominate over residues 97-108 (TTKEASAKKPTD).

This sequence belongs to the bacterial ribosomal protein bS16 family.

The chain is Small ribosomal subunit protein bS16 from Leuconostoc mesenteroides subsp. mesenteroides (strain ATCC 8293 / DSM 20343 / BCRC 11652 / CCM 1803 / JCM 6124 / NCDO 523 / NBRC 100496 / NCIMB 8023 / NCTC 12954 / NRRL B-1118 / 37Y).